The following is a 1208-amino-acid chain: DNA-directed RNA polymerase subunit beta (1208 aa).

This sequence belongs to the RNA polymerase beta chain family. As to quaternary structure, the RNAP catalytic core consists of 2 alpha, 1 beta, 1 beta' and 1 omega subunit. When a sigma factor is associated with the core the holoenzyme is formed, which can initiate transcription.

It carries out the reaction RNA(n) + a ribonucleoside 5'-triphosphate = RNA(n+1) + diphosphate. Its function is as follows. DNA-dependent RNA polymerase catalyzes the transcription of DNA into RNA using the four ribonucleoside triphosphates as substrates. In Enterococcus faecium (Streptococcus faecium), this protein is DNA-directed RNA polymerase subunit beta.